We begin with the raw amino-acid sequence, 388 residues long: Probable mannan endo-1,4-beta-mannosidase A-1 (388 aa).

The first 20 residues, 1–20, serve as a signal peptide directing secretion; that stretch reads MKLSPLMALAGLASAQLALA. W93 and N206 together coordinate substrate. E207 acts as the Proton donor in catalysis. The N-linked (GlcNAc...) asparagine glycan is linked to N264. Substrate is bound at residue Y282. E315 serves as the catalytic Nucleophile. The N-linked (GlcNAc...) asparagine glycan is linked to N335. W345 contacts substrate.

It belongs to the glycosyl hydrolase 5 (cellulase A) family.

It localises to the secreted. It catalyses the reaction Random hydrolysis of (1-&gt;4)-beta-D-mannosidic linkages in mannans, galactomannans and glucomannans.. Functionally, endo-1,4-mannanase, a crucial enzyme for depolymerization of seed galactomannans and wood galactoglucomannans. The polypeptide is Probable mannan endo-1,4-beta-mannosidase A-1 (manA-1) (Aspergillus terreus (strain NIH 2624 / FGSC A1156)).